The primary structure comprises 137 residues: Nucleoside diphosphate kinase (137 aa).

Positions 10, 58, 86, 92, 103, and 113 each coordinate ATP. His116 serves as the catalytic Pros-phosphohistidine intermediate.

This sequence belongs to the NDK family. In terms of assembly, homotetramer. The cofactor is Mg(2+).

It is found in the cytoplasm. It catalyses the reaction a 2'-deoxyribonucleoside 5'-diphosphate + ATP = a 2'-deoxyribonucleoside 5'-triphosphate + ADP. The enzyme catalyses a ribonucleoside 5'-diphosphate + ATP = a ribonucleoside 5'-triphosphate + ADP. Its function is as follows. Major role in the synthesis of nucleoside triphosphates other than ATP. The ATP gamma phosphate is transferred to the NDP beta phosphate via a ping-pong mechanism, using a phosphorylated active-site intermediate. The polypeptide is Nucleoside diphosphate kinase (Helicobacter acinonychis (strain Sheeba)).